Reading from the N-terminus, the 598-residue chain is Elongation factor 4 (598 aa).

In terms of domain architecture, tr-type G spans 2-183; that stretch reads KHIRNFCIIA…AIIEKIPHPK (182 aa). Residues 14–19 and 130–133 contribute to the GTP site; these read DHGKST and NKVD.

The protein belongs to the TRAFAC class translation factor GTPase superfamily. Classic translation factor GTPase family. LepA subfamily.

The protein resides in the cell inner membrane. It catalyses the reaction GTP + H2O = GDP + phosphate + H(+). Required for accurate and efficient protein synthesis under certain stress conditions. May act as a fidelity factor of the translation reaction, by catalyzing a one-codon backward translocation of tRNAs on improperly translocated ribosomes. Back-translocation proceeds from a post-translocation (POST) complex to a pre-translocation (PRE) complex, thus giving elongation factor G a second chance to translocate the tRNAs correctly. Binds to ribosomes in a GTP-dependent manner. This is Elongation factor 4 from Flavobacterium psychrophilum (strain ATCC 49511 / DSM 21280 / CIP 103535 / JIP02/86).